A 370-amino-acid chain; its full sequence is UDP-N-acetylglucosamine--N-acetylmuramyl-(pentapeptide) pyrophosphoryl-undecaprenol N-acetylglucosamine transferase (370 aa).

UDP-N-acetyl-alpha-D-glucosamine-binding positions include 15-17 (TGG), Asn-129, Arg-171, Ser-200, Ile-256, and Gln-301.

This sequence belongs to the glycosyltransferase 28 family. MurG subfamily.

It is found in the cell membrane. It carries out the reaction di-trans,octa-cis-undecaprenyl diphospho-N-acetyl-alpha-D-muramoyl-L-alanyl-D-glutamyl-meso-2,6-diaminopimeloyl-D-alanyl-D-alanine + UDP-N-acetyl-alpha-D-glucosamine = di-trans,octa-cis-undecaprenyl diphospho-[N-acetyl-alpha-D-glucosaminyl-(1-&gt;4)]-N-acetyl-alpha-D-muramoyl-L-alanyl-D-glutamyl-meso-2,6-diaminopimeloyl-D-alanyl-D-alanine + UDP + H(+). Its pathway is cell wall biogenesis; peptidoglycan biosynthesis. Functionally, cell wall formation. Catalyzes the transfer of a GlcNAc subunit on undecaprenyl-pyrophosphoryl-MurNAc-pentapeptide (lipid intermediate I) to form undecaprenyl-pyrophosphoryl-MurNAc-(pentapeptide)GlcNAc (lipid intermediate II). The polypeptide is UDP-N-acetylglucosamine--N-acetylmuramyl-(pentapeptide) pyrophosphoryl-undecaprenol N-acetylglucosamine transferase (Caldicellulosiruptor saccharolyticus (strain ATCC 43494 / DSM 8903 / Tp8T 6331)).